Consider the following 62-residue polypeptide: Large ribosomal subunit protein uL30 (62 aa).

The protein belongs to the universal ribosomal protein uL30 family. Part of the 50S ribosomal subunit.

This Prosthecochloris aestuarii (strain DSM 271 / SK 413) protein is Large ribosomal subunit protein uL30.